We begin with the raw amino-acid sequence, 264 residues long: uncharacterized protein (264 aa).

This is an uncharacterized protein from Escherichia coli (strain K12).